We begin with the raw amino-acid sequence, 367 residues long: Anthranilate phosphoribosyltransferase (367 aa).

5-phospho-alpha-D-ribose 1-diphosphate contacts are provided by residues glycine 105, 108 to 109, threonine 113, 115 to 118, 133 to 141, and glycine 145; these read GD, NIST, and KHGNRAASS. Glycine 105 contacts anthranilate. A Mg(2+)-binding site is contributed by serine 117. An anthranilate-binding site is contributed by asparagine 136. Arginine 191 contacts anthranilate. The Mg(2+) site is built by aspartate 249 and glutamate 250.

The protein belongs to the anthranilate phosphoribosyltransferase family. As to quaternary structure, homodimer. It depends on Mg(2+) as a cofactor.

It catalyses the reaction N-(5-phospho-beta-D-ribosyl)anthranilate + diphosphate = 5-phospho-alpha-D-ribose 1-diphosphate + anthranilate. It participates in amino-acid biosynthesis; L-tryptophan biosynthesis; L-tryptophan from chorismate: step 2/5. Catalyzes the transfer of the phosphoribosyl group of 5-phosphorylribose-1-pyrophosphate (PRPP) to anthranilate to yield N-(5'-phosphoribosyl)-anthranilate (PRA). This is Anthranilate phosphoribosyltransferase from Corynebacterium jeikeium (strain K411).